Here is a 219-residue protein sequence, read N- to C-terminus: 3-dehydroquinate dehydratase (219 aa).

3-dehydroquinate contacts are provided by residues 28–30 (ELR) and Arg-61. His-116 (proton donor/acceptor) is an active-site residue. The Schiff-base intermediate with substrate role is filled by Lys-142. Arg-180 and Gln-203 together coordinate 3-dehydroquinate.

This sequence belongs to the type-I 3-dehydroquinase family. Homodimer.

It catalyses the reaction 3-dehydroquinate = 3-dehydroshikimate + H2O. It functions in the pathway metabolic intermediate biosynthesis; chorismate biosynthesis; chorismate from D-erythrose 4-phosphate and phosphoenolpyruvate: step 3/7. Functionally, involved in the third step of the chorismate pathway, which leads to the biosynthesis of aromatic amino acids. Catalyzes the cis-dehydration of 3-dehydroquinate (DHQ) and introduces the first double bond of the aromatic ring to yield 3-dehydroshikimate. The chain is 3-dehydroquinate dehydratase from Aquifex aeolicus (strain VF5).